A 400-amino-acid chain; its full sequence is Nicotinate phosphoribosyltransferase (400 aa).

H220 carries the post-translational modification Phosphohistidine; by autocatalysis.

This sequence belongs to the NAPRTase family. Post-translationally, transiently phosphorylated on a His residue during the reaction cycle. Phosphorylation strongly increases the affinity for substrates and increases the rate of nicotinate D-ribonucleotide production. Dephosphorylation regenerates the low-affinity form of the enzyme, leading to product release.

It catalyses the reaction nicotinate + 5-phospho-alpha-D-ribose 1-diphosphate + ATP + H2O = nicotinate beta-D-ribonucleotide + ADP + phosphate + diphosphate. It participates in cofactor biosynthesis; NAD(+) biosynthesis; nicotinate D-ribonucleotide from nicotinate: step 1/1. Catalyzes the synthesis of beta-nicotinate D-ribonucleotide from nicotinate and 5-phospho-D-ribose 1-phosphate at the expense of ATP. The chain is Nicotinate phosphoribosyltransferase from Citrobacter koseri (strain ATCC BAA-895 / CDC 4225-83 / SGSC4696).